Reading from the N-terminus, the 753-residue chain is Polyadenylate-binding protein, cytoplasmic and nuclear (753 aa).

Residues 1-43 (MSAEASTTPAAETPVNGTPETSTTPAAPAAEATAAETAAPSTS) show a composition bias toward low complexity. The interval 1-49 (MSAEASTTPAAETPVNGTPETSTTPAAPAAEATAAETAAPSTSQPHSAS) is disordered. RRM domains lie at 48–126 (ASLY…WSQR), 136–213 (GNVF…HHIS), 229–306 (TNVY…RAQK), and 332–460 (VNLY…LAQR). Disordered stretches follow at residues 363 to 417 (VMRD…SDKK), 607 to 649 (RGPG…PAAG), and 727 to 753 (GTEG…ENKS). Positions 376–417 (DSDKEKKEESKEEKPEAAEKTEEAAKESGDDQDKENKKSDKK) are enriched in basic and acidic residues. Residues 607 to 619 (RGPGYGQGRGGVP) are compositionally biased toward gly residues. The segment covering 633-649 (QNAQPAAGRGEEAPAAG) has biased composition (low complexity). The region spanning 647 to 724 (AAGLTAQSLA…ALSVYDEYMK (78 aa)) is the PABC domain. The segment covering 737–753 (PKPKEAATEESTEENKS) has biased composition (basic and acidic residues).

The protein belongs to the polyadenylate-binding protein type-1 family.

It is found in the cytoplasm. Its subcellular location is the nucleus. In terms of biological role, binds the poly(A) tail of mRNA. Appears to be an important mediator of the multiple roles of the poly(A) tail in mRNA biogenesis, stability and translation. In the nucleus, involved in both mRNA cleavage and polyadenylation. Is also required for efficient mRNA export to the cytoplasm. Acts in concert with a poly(A)-specific nuclease (PAN) to affect poly(A) tail shortening, which may occur concomitantly with either nucleocytoplasmic mRNA transport or translational initiation. In the cytoplasm, stimulates translation initiation and regulates mRNA decay through translation termination-coupled poly(A) shortening, probably mediated by PAN. The sequence is that of Polyadenylate-binding protein, cytoplasmic and nuclear (pab1) from Aspergillus terreus (strain NIH 2624 / FGSC A1156).